Consider the following 197-residue polypeptide: UPF0462 protein C4orf33 homolog (197 aa).

This sequence belongs to the UPF0462 family.

This is UPF0462 protein C4orf33 homolog from Danio rerio (Zebrafish).